A 216-amino-acid chain; its full sequence is Holliday junction branch migration complex subunit RuvA (216 aa).

Residues 1–64 (MISFIKGVLI…EDAQQLYGFK (64 aa)) form a domain I region. The domain II stretch occupies residues 65-143 (SKVDKKVFQE…KMANEIYAQT (79 aa)). Residues 144–163 (SGTTTTSQDSQAQQAPTSVV) are flexible linker. A domain III region spans residues 164-216 (LANSIFNESVDALLALGYKQKDAEKMARSAMGDATTAAEVIRKALQGSIKSKG).

It belongs to the RuvA family. Homotetramer. Forms an RuvA(8)-RuvB(12)-Holliday junction (HJ) complex. HJ DNA is sandwiched between 2 RuvA tetramers; dsDNA enters through RuvA and exits via RuvB. An RuvB hexamer assembles on each DNA strand where it exits the tetramer. Each RuvB hexamer is contacted by two RuvA subunits (via domain III) on 2 adjacent RuvB subunits; this complex drives branch migration. In the full resolvosome a probable DNA-RuvA(4)-RuvB(12)-RuvC(2) complex forms which resolves the HJ.

Its subcellular location is the cytoplasm. Its function is as follows. The RuvA-RuvB-RuvC complex processes Holliday junction (HJ) DNA during genetic recombination and DNA repair, while the RuvA-RuvB complex plays an important role in the rescue of blocked DNA replication forks via replication fork reversal (RFR). RuvA specifically binds to HJ cruciform DNA, conferring on it an open structure. The RuvB hexamer acts as an ATP-dependent pump, pulling dsDNA into and through the RuvAB complex. HJ branch migration allows RuvC to scan DNA until it finds its consensus sequence, where it cleaves and resolves the cruciform DNA. This Francisella tularensis subsp. holarctica (strain FTNF002-00 / FTA) protein is Holliday junction branch migration complex subunit RuvA.